Here is a 236-residue protein sequence, read N- to C-terminus: Small ribosomal subunit protein uS2c (236 aa).

This sequence belongs to the universal ribosomal protein uS2 family.

The protein localises to the plastid. It localises to the chloroplast. This Coffea arabica (Arabian coffee) protein is Small ribosomal subunit protein uS2c (rps2).